Here is a 593-residue protein sequence, read N- to C-terminus: Inactive metallocarboxypeptidase ECM14 (593 aa).

A signal peptide spans 1–22 (MHFSVRLSLLLTLASSLPLVSA). Positions 23 to 184 (IPQHEDQAYT…QTIYESYPKT (162 aa)) are excised as a propeptide. The interval 180 to 210 (SYPKTNPSSPSQQGPTTRRFSPSASTSKTKP) is disordered. The span at 182–210 (PKTNPSSPSQQGPTTRRFSPSASTSKTKP) shows a compositional bias: polar residues. The Peptidase M14 domain maps to 220–546 (DYQPLSVLLP…RAMVAMGKFL (327 aa)). Zn(2+) is bound by residues His285 and Glu288. Substrate is bound by residues 285-288 (HARE), Arg343, and 360-361 (DH). A disulfide bridge links Cys354 with Cys377. Asn370 carries N-linked (GlcNAc...) asparagine glycosylation. Residue His417 coordinates Zn(2+). Residue 418–419 (SY) participates in substrate binding. Residues 557–593 (NGPHAAEETQNYDDDFEEDEAEEDSDVFRAQGDDMSS) form a disordered region. Acidic residues predominate over residues 566–581 (QNYDDDFEEDEAEEDS).

It belongs to the peptidase M14 family. The cofactor is Zn(2+).

The protein localises to the vacuole. It localises to the secreted. Its function is as follows. Inactive carboxypeptidase that may play a role in cell wall organization and biogenesis. This Arthroderma gypseum (strain ATCC MYA-4604 / CBS 118893) (Microsporum gypseum) protein is Inactive metallocarboxypeptidase ECM14 (ECM14).